A 237-amino-acid chain; its full sequence is Ribitol-5-phosphate cytidylyltransferase (237 aa).

Residues 7–10 (LAGG) and 80–86 (GEDRNET) contribute to the CTP site.

This sequence belongs to the IspD/TarI cytidylyltransferase family. TarI subfamily.

It carries out the reaction D-ribitol 5-phosphate + CTP + H(+) = CDP-L-ribitol + diphosphate. Its pathway is cell wall biogenesis; poly(ribitol phosphate) teichoic acid biosynthesis. Functionally, catalyzes the transfer of the cytidylyl group of CTP to D-ribitol 5-phosphate. This Listeria monocytogenes serotype 4b (strain F2365) protein is Ribitol-5-phosphate cytidylyltransferase.